The primary structure comprises 748 residues: Structure-specific endonuclease subunit SLX4 (748 aa).

The segment covering Lys62 to Thr75 has biased composition (polar residues). Residues Lys62–Asn104 are disordered. A Phosphothreonine; by ATR and ATM modification is found at Thr72. Residues Thr76–Lys88 are compositionally biased toward basic and acidic residues. At Thr113 the chain carries Phosphothreonine; by ATR and ATM. Disordered stretches follow at residues Ile215–Lys236 and Glu277–Leu303. Residues Asn222–Lys236 are compositionally biased toward basic and acidic residues. Residues Glu277–Gln298 show a composition bias toward polar residues. Ser289 is subject to Phosphoserine; by ATR and ATM. Phosphothreonine; by ATR and ATM is present on Thr319. 2 positions are modified to phosphoserine; by ATR and ATM: Ser329 and Ser355. The span at Ile591–Thr602 shows a compositional bias: polar residues. Positions Ile591–Ser610 are disordered.

It belongs to the SLX4 family. As to quaternary structure, forms a heterodimer with SLX1. Interacts with RAD1; catalytic subunit of the RAD1-RAD10 endonuclease. Interacts with RTT107. Phosphorylated by ATR (MEC1) and ATM (TEL1) upon DNA damage. This appears to be required for the function with the RAD1-RAD10 endonuclease.

The protein localises to the nucleus. It localises to the cytoplasm. Regulatory subunit that interacts with and increases the activity of different structure-specific endonucleases. Has several distinct roles in protecting genome stability by resolving diverse forms of deleterious DNA structures. Component of the SLX1-SLX4 structure-specific endonuclease that resolves DNA secondary structures generated during DNA repair and recombination. Has endonuclease activity towards branched DNA substrates, introducing single-strand cuts in duplex DNA close to junctions with ss-DNA. Has a preference for simple Y, 5'-flap and replication fork-like structures. It cleaves the strand bearing the 5'-non-homologous arm at the branch site junction and generates ligatable, nicked products from the 5'-flap or replication fork substrates. Plays a critical role in maintaining the integrity of the ribosomal DNA (rDNA) loci, where it has a role in re-starting stalled replication forks. Has Holliday junction resolvase activity in vitro. Interacts with the structure-specific RAD1-RAD10 endonuclease and promotes RAD1-RAD10-dependent 3'-non-homologous tail removal (NHTR) during repair of double-strand breaks by single-strand annealing. SLX4 also promotes recovery from DNA-alkylation-induced replisome stalling during DNA replication by facilitating the error-free mode of lesion bypass. This does not require SLX1 or RAD1-RAD10, but probably RTT107. This chain is Structure-specific endonuclease subunit SLX4, found in Saccharomyces cerevisiae (strain RM11-1a) (Baker's yeast).